We begin with the raw amino-acid sequence, 863 residues long: Autotaxin (863 aa).

The first 27 residues, 1 to 27, serve as a signal peptide directing secretion; it reads MARRSSFQSCQIISLFTFAVGVNICLG. Residues 28–35 constitute a propeptide, removed by furin; sequence FTAHRIKR. N-linked (GlcNAc...) asparagine glycosylation occurs at Asn54. SMB domains are found at residues 55-98 and 99-143; these read ISGS…LKTA and RGWE…GESH. Intrachain disulfides connect Cys59/Cys76, Cys63/Cys94, Cys74/Cys87, Cys80/Cys86, Cys103/Cys120, Cys108/Cys138, Cys118/Cys131, Cys124/Cys130, Cys149/Cys195, and Cys157/Cys351. Residues 127-129 carry the Cell attachment site motif; the sequence is RGD. Residues 145–502 are phosphodiesterase; it reads VDDDCEEIKA…STFKYKTKVP (358 aa). The Zn(2+) site is built by Asp172 and Thr210. Thr210 (nucleophile) is an active-site residue. Residues Thr210, Asn231, and Asp312 each contribute to the 1-(9Z-octadecenoyl)-sn-glycero-3-phosphate site. Residues Thr210, Asn231, and Asp312 each coordinate 1-hexadecanoyl-sn-glycero-3-phosphate. 1-tetradecanoyl-sn-glycerol 3-phosphate contacts are provided by Thr210, Asn231, and Asp312. Zn(2+)-binding residues include Asp312, His316, Asp359, and His360. Intrachain disulfides connect Cys367/Cys469, Cys414/Cys806, Cys567/Cys667, Cys569/Cys652, and Cys775/Cys785. A glycan (N-linked (GlcNAc...) asparagine) is linked at Asn411. Position 475 (His475) interacts with Zn(2+). His475 is a 1-(9Z-octadecenoyl)-sn-glycero-3-phosphate binding site. His475 contributes to the 1-hexadecanoyl-sn-glycero-3-phosphate binding site. His475 contacts 1-tetradecanoyl-sn-glycerol 3-phosphate. Asn525 carries N-linked (GlcNAc...) asparagine glycosylation. Residues 598–863 form a nuclease-like domain region; it reads LYGRPAVLYR…TYLHTYESEI (266 aa). Positions 740, 742, 744, 746, and 748 each coordinate Ca(2+). Asn807 carries an N-linked (GlcNAc...) asparagine glycan. The tract at residues 830-851 is required for secretion; that stretch reads IEHLTSLDFFRKTSRSYPEILT.

It belongs to the nucleotide pyrophosphatase/phosphodiesterase family. It depends on Zn(2+) as a cofactor. The cofactor is Ca(2+). Post-translationally, N-glycosylation, but not furin-cleavage, plays a critical role on secretion and on lysoPLD activity. In terms of processing, the interdomain disulfide bond between Cys-414 and Cys-806 is essential for catalytic activity. Detected in blood plasma (at protein level). Predominantly expressed in brain, placenta, ovary, and small intestine. Expressed in a number of carcinomas such as hepatocellular and prostate carcinoma, neuroblastoma and non-small-cell lung cancer. Expressed in body fluids such as plasma, cerebral spinal fluid (CSF), saliva, follicular and amniotic fluids. Not detected in leukocytes. Isoform 1 is more highly expressed in peripheral tissues than in the central nervous system (CNS). Adipocytes only express isoform 1. Isoform 3 is more highly expressed in the brain than in peripheral tissues.

The protein resides in the secreted. The enzyme catalyses a 1-O-alkyl-sn-glycero-3-phosphoethanolamine + H2O = a 1-O-alkyl-sn-glycero-3-phosphate + ethanolamine + H(+). It carries out the reaction a 1-acyl-sn-glycero-3-phosphoethanolamine + H2O = a 1-acyl-sn-glycero-3-phosphate + ethanolamine + H(+). It catalyses the reaction 1-(9Z-octadecenoyl)-sn-glycero-3-phosphoethanolamine + H2O = 1-(9Z-octadecenoyl)-sn-glycero-3-phosphate + ethanolamine + H(+). The catalysed reaction is a 1-O-alkyl-sn-glycero-3-phosphocholine + H2O = a 1-O-alkyl-sn-glycero-3-phosphate + choline + H(+). The enzyme catalyses 1-O-(9Z-octadecenyl)-sn-glycero-3-phosphocholine + H2O = 1-O-(9Z-octadecenyl)-sn-glycero-3-phosphate + choline + H(+). It carries out the reaction 1-O-hexadecyl-sn-glycero-3-phosphocholine + H2O = 1-O-hexadecyl-sn-glycero-3-phosphate + choline + H(+). It catalyses the reaction a 1-O-(1Z-alkenyl)-sn-glycero-3-phosphocholine + H2O = a 1-O-(1Z-alkenyl)-sn-glycero-3-phosphate + choline + H(+). The catalysed reaction is a 1-acyl-sn-glycero-3-phosphocholine + H2O = a 1-acyl-sn-glycero-3-phosphate + choline + H(+). The enzyme catalyses 1-dodecanoyl-sn-glycero-3-phosphocholine + H2O = 1-dodecanoyl-sn-glycerol 3-phosphate + choline + H(+). It carries out the reaction 1-(9Z-octadecenoyl)-sn-glycero-3-phosphocholine + H2O = 1-(9Z-octadecenoyl)-sn-glycero-3-phosphate + choline + H(+). It catalyses the reaction 1-tetradecanoyl-sn-glycero-3-phosphocholine + H2O = 1-tetradecanoyl-sn-glycerol 3-phosphate + choline + H(+). The catalysed reaction is 1-decanoyl-sn-glycero-3-phosphocholine + H2O = 1-decanoyl-sn-glycero-3-phosphate + choline + H(+). The enzyme catalyses 1-octadecanoyl-sn-glycero-3-phosphocholine + H2O = 1-octadecanoyl-sn-glycero-3-phosphate + choline + H(+). It carries out the reaction 1-hexadecanoyl-sn-glycero-3-phosphocholine + H2O = 1-hexadecanoyl-sn-glycero-3-phosphate + choline + H(+). It catalyses the reaction 1-hexanoyl-sn-glycero-3-phosphocholine + H2O = 1-hexanoyl-sn-glycero-3-phosphate + choline + H(+). The catalysed reaction is 1-(9Z,12Z)-octadecadienoyl-sn-glycero-3-phosphocholine + H2O = 1-(9Z,12Z)-octadecadienoyl-sn-glycero-3-phosphate + choline + H(+). The enzyme catalyses sphing-4-enine-phosphocholine + H2O = sphing-4-enine 1-phosphate + choline + H(+). It carries out the reaction 1-(5Z,8Z,11Z,14Z-eicosatetraenoyl)-sn-glycero-3-phosphocholine + H2O = 1-(5Z,8Z,11Z,14Z-eicosatetraenoyl)-sn-glycero-3-phosphate + choline + H(+). It catalyses the reaction a 2-acyl-sn-glycero-3-phosphocholine + H2O = a 2-acyl-sn-glycerol 3-phosphate + choline + H(+). The catalysed reaction is a 1,2-diacyl-sn-glycero-3-phosphocholine + H2O = a 1,2-diacyl-sn-glycero-3-phosphate + choline + H(+). The enzyme catalyses 1,2-dioctanoyl-sn-glycero-3-phosphocholine + H2O = 1,2-dioctanoyl-sn-glycero-3-phosphate + choline + H(+). It carries out the reaction 1,2-didecanoyl-sn-glycero-3-phosphocholine + H2O = 1,2-didecanoyl-sn-glycero-3-phosphate + choline + H(+). It catalyses the reaction a 1-acyl-sn-glycero-3-phospho-L-serine + H2O = a 1-acyl-sn-glycero-3-phosphate + L-serine + H(+). The catalysed reaction is 1-(9Z-octadecenoyl)-sn-glycero-3-phospho-L-serine + H2O = 1-(9Z-octadecenoyl)-sn-glycero-3-phosphate + L-serine + H(+). The enzyme catalyses a 2-acyl-sn-glycero-3-phospho-L-serine + H2O = a 2-acyl-sn-glycerol 3-phosphate + L-serine + H(+). Inhibited by lysophosphatidic acid (LPA) and sphingosine-1-phosphate (S1P). Inhibited by EDTA and EGTA. Secreted lysophospholipase D that hydrolyzes lysophospholipids to produce the signaling molecule lysophosphatidic acid (LPA) in extracellular fluids. Its major substrate is lysophosphatidylcholine. Can also act on sphingosylphosphorylcholine producing sphingosine-1-phosphate, a modulator of cell motility. Can hydrolyze, in vitro, bis-pNPP, to some extent pNP-TMP, and barely ATP. Involved in several motility-related processes such as angiogenesis and neurite outgrowth. Acts as an angiogenic factor by stimulating migration of smooth muscle cells and microtubule formation. Stimulates migration of melanoma cells, probably via a pertussis toxin-sensitive G protein. May have a role in induction of parturition. Possible involvement in cell proliferation and adipose tissue development. Required for LPA production in activated platelets, cleaves the sn-1 lysophospholipids to generate sn-1 lysophosphatidic acids containing predominantly 18:2 and 20:4 fatty acids. Shows a preference for the sn-1 to the sn-2 isomer of 1-O-alkyl-sn-glycero-3-phosphocholine (lyso-PAF). The sequence is that of Autotaxin from Homo sapiens (Human).